A 218-amino-acid polypeptide reads, in one-letter code: Small ribosomal subunit protein uS3 (218 aa).

Position 1 is an N-acetylmethionine (Met1). Residues 23-95 (LNELFTREFN…TVVLFAEKIL (73 aa)) form the KH type-2 domain.

The protein belongs to the universal ribosomal protein uS3 family.

The protein is Small ribosomal subunit protein uS3 (rps3) of Dictyostelium discoideum (Social amoeba).